The sequence spans 197 residues: Recombination protein RecR (197 aa).

Residues Cys-57 to Cys-72 form a C4-type zinc finger. Positions Ser-79–Pro-174 constitute a Toprim domain.

This sequence belongs to the RecR family.

Its function is as follows. May play a role in DNA repair. It seems to be involved in an RecBC-independent recombinational process of DNA repair. It may act with RecF and RecO. This chain is Recombination protein RecR, found in Trichlorobacter lovleyi (strain ATCC BAA-1151 / DSM 17278 / SZ) (Geobacter lovleyi).